Here is a 572-residue protein sequence, read N- to C-terminus: Proline--tRNA ligase (572 aa).

Belongs to the class-II aminoacyl-tRNA synthetase family. ProS type 1 subfamily. In terms of assembly, homodimer.

It localises to the cytoplasm. The enzyme catalyses tRNA(Pro) + L-proline + ATP = L-prolyl-tRNA(Pro) + AMP + diphosphate. Catalyzes the attachment of proline to tRNA(Pro) in a two-step reaction: proline is first activated by ATP to form Pro-AMP and then transferred to the acceptor end of tRNA(Pro). As ProRS can inadvertently accommodate and process non-cognate amino acids such as alanine and cysteine, to avoid such errors it has two additional distinct editing activities against alanine. One activity is designated as 'pretransfer' editing and involves the tRNA(Pro)-independent hydrolysis of activated Ala-AMP. The other activity is designated 'posttransfer' editing and involves deacylation of mischarged Ala-tRNA(Pro). The misacylated Cys-tRNA(Pro) is not edited by ProRS. This Salmonella dublin (strain CT_02021853) protein is Proline--tRNA ligase.